Reading from the N-terminus, the 614-residue chain is Serine/threonine-protein kinase Pkn1 (614 aa).

Positions 13-276 (YKVIAELGHG…TSGEQLQVTL (264 aa)) constitute a Protein kinase domain. Residues 19–27 (LGHGLWSRD) and lysine 42 each bind ATP.

It belongs to the protein kinase superfamily. Ser/Thr protein kinase family. In terms of assembly, interacts with PknD, interacts with and phosphorylates IncG. In terms of processing, autophosphorylates on serine and threonine residues. Present in elementary bodies 40 hours post-infection as 2 proteins of approximately 70 and 65 kDa; the smaller one may be due to differential phosphorylation or degradation.

The catalysed reaction is L-seryl-[protein] + ATP = O-phospho-L-seryl-[protein] + ADP + H(+). It catalyses the reaction L-threonyl-[protein] + ATP = O-phospho-L-threonyl-[protein] + ADP + H(+). Its function is as follows. Together with the serine/threonine kinase PknD, may play a role in specific interactions with host proteins during host intracellular growth. Autophosphorylates and phosphorylates IncG, an inclusion-membrane protein required for the modification of the nascent chlamydial inclusion. This chain is Serine/threonine-protein kinase Pkn1 (pkn1), found in Chlamydia trachomatis serovar L2 (strain ATCC VR-902B / DSM 19102 / 434/Bu).